The primary structure comprises 339 residues: Phenylalanine--tRNA ligase alpha subunit (339 aa).

Position 254 (glutamate 254) interacts with Mg(2+).

Belongs to the class-II aminoacyl-tRNA synthetase family. Phe-tRNA synthetase alpha subunit type 1 subfamily. Tetramer of two alpha and two beta subunits. Mg(2+) is required as a cofactor.

It is found in the cytoplasm. It carries out the reaction tRNA(Phe) + L-phenylalanine + ATP = L-phenylalanyl-tRNA(Phe) + AMP + diphosphate + H(+). The protein is Phenylalanine--tRNA ligase alpha subunit of Clostridium beijerinckii (strain ATCC 51743 / NCIMB 8052) (Clostridium acetobutylicum).